Reading from the N-terminus, the 378-residue chain is MSKRDYYETLGVSQDASEKEVKKAYKKLAMKYHPDRTQGDKSKEETFKEVKEAYEILNDDQKRAAYDQYGHAAFEQGGNGGGGGGHGGGFGQDFGDIFGDIFGGGGGGRGRQRQQRGSDLRYNVDLSLEDAVKGKSLEIKVPTYVSCEPCDGSGAKKGTSAKTCSTCHGHGQVQMRQGLFAVQQTCPTCSGKGKVIADKCTSCRGQGRVEKTKTLSVKIPAGVDTGDRIRLSGEGEAGEHGAPAGDLYVQVNVRDHEIFVRDENHLYCEVPISFVTAALGGDIEVPTLGGKVKLKVPKETQTGKMFRLRGKGVKSVRSSTTGDLMCKVVIETPVNLSGDQADLLRQLEEKMASSSKKHSPKETGFFDGVKKFFDDLKS.

The region spanning 5 to 70 (DYYETLGVSQ…QKRAAYDQYG (66 aa)) is the J domain. The segment at 134–212 (GKSLEIKVPT…CRGQGRVEKT (79 aa)) adopts a CR-type zinc-finger fold. Zn(2+) is bound by residues C147, C150, C164, C167, C186, C189, C200, and C203. CXXCXGXG motif repeat units lie at residues 147-154 (CEPCDGSG), 164-171 (CSTCHGHG), 186-193 (CPTCSGKG), and 200-207 (CTSCRGQG).

Belongs to the DnaJ family. As to quaternary structure, homodimer. It depends on Zn(2+) as a cofactor.

It localises to the cytoplasm. Participates actively in the response to hyperosmotic and heat shock by preventing the aggregation of stress-denatured proteins and by disaggregating proteins, also in an autonomous, DnaK-independent fashion. Unfolded proteins bind initially to DnaJ; upon interaction with the DnaJ-bound protein, DnaK hydrolyzes its bound ATP, resulting in the formation of a stable complex. GrpE releases ADP from DnaK; ATP binding to DnaK triggers the release of the substrate protein, thus completing the reaction cycle. Several rounds of ATP-dependent interactions between DnaJ, DnaK and GrpE are required for fully efficient folding. Also involved, together with DnaK and GrpE, in the DNA replication of plasmids through activation of initiation proteins. The polypeptide is Chaperone protein DnaJ (Colwellia psychrerythraea (strain 34H / ATCC BAA-681) (Vibrio psychroerythus)).